The sequence spans 577 residues: Glycine--tRNA ligase (577 aa).

Residues Arg98 and Glu164 each contribute to the substrate site. Residues 196 to 198, 206 to 211, 328 to 329, and 451 to 454 contribute to the ATP site; these read RNE, IRLREF, EC, and GIDR. 211–215 provides a ligand contact to substrate; that stretch reads FTQAE. 447–451 contacts substrate; the sequence is EPSYG.

This sequence belongs to the class-II aminoacyl-tRNA synthetase family.

It is found in the cytoplasm. It catalyses the reaction tRNA(Gly) + glycine + ATP = glycyl-tRNA(Gly) + AMP + diphosphate. Catalyzes the attachment of glycine to tRNA(Gly). The protein is Glycine--tRNA ligase of Methanocaldococcus jannaschii (strain ATCC 43067 / DSM 2661 / JAL-1 / JCM 10045 / NBRC 100440) (Methanococcus jannaschii).